The primary structure comprises 217 residues: Adenylate kinase (217 aa).

Position 10–15 (10–15 (GAGKGT)) interacts with ATP. Residues 30 to 59 (STGDMLRAAVKAGTPLGVEAKKVMDAGGLV) are NMP. AMP-binding positions include T31, R36, 57 to 59 (GLV), 85 to 88 (GFPR), and Q92. The interval 122-159 (GRRAHLASGRTYHVKYNPPKVAGKDDLTGEDLVQRDDD) is LID. ATP contacts are provided by residues R123 and 132–133 (TY). AMP contacts are provided by R156 and R167. Position 203 (G203) interacts with ATP.

It belongs to the adenylate kinase family. In terms of assembly, monomer.

The protein localises to the cytoplasm. It catalyses the reaction AMP + ATP = 2 ADP. Its pathway is purine metabolism; AMP biosynthesis via salvage pathway; AMP from ADP: step 1/1. Its function is as follows. Catalyzes the reversible transfer of the terminal phosphate group between ATP and AMP. Plays an important role in cellular energy homeostasis and in adenine nucleotide metabolism. The sequence is that of Adenylate kinase from Aromatoleum aromaticum (strain DSM 19018 / LMG 30748 / EbN1) (Azoarcus sp. (strain EbN1)).